Reading from the N-terminus, the 351-residue chain is MNNSWWLEPCKAIDTQMVEQALARQQQLTKPAGSLGRLEPLAVRLAGLQGRLKPGIERLWIAIFAGDHGVVAEGVSAYPQEVTGQMLLNFVSGGAAISVLARQLQAQLEVVDLGTVTPGLNLPGVRHLNLGAGTQNFVQGPAMTRAQGEQALQAGRDSALRAHADGAQLFIGGEMGIGNTTAASAIACALLGIPVAQLAGPGTGLNAEGVNHKAQVIERALALHDASRGDALQTLFNLGGFEVAALVGAYLACAQEGIAVLVDGFICSVAALVAVRLNPACAPWLLFAHQGAEPGHRHVLQTLQAEPLLDLGLRLGEGSGAALAVPLLRLACDLHGQMATFAEAAVADRPA.

Glu317 serves as the catalytic Proton acceptor.

This sequence belongs to the CobT family.

It catalyses the reaction 5,6-dimethylbenzimidazole + nicotinate beta-D-ribonucleotide = alpha-ribazole 5'-phosphate + nicotinate + H(+). Its pathway is nucleoside biosynthesis; alpha-ribazole biosynthesis; alpha-ribazole from 5,6-dimethylbenzimidazole: step 1/2. In terms of biological role, catalyzes the synthesis of alpha-ribazole-5'-phosphate from nicotinate mononucleotide (NAMN) and 5,6-dimethylbenzimidazole (DMB). The protein is Nicotinate-nucleotide--dimethylbenzimidazole phosphoribosyltransferase of Pseudomonas fluorescens (strain ATCC BAA-477 / NRRL B-23932 / Pf-5).